Here is a 103-residue protein sequence, read N- to C-terminus: Large ribosomal subunit protein bL21 (103 aa).

This sequence belongs to the bacterial ribosomal protein bL21 family. In terms of assembly, part of the 50S ribosomal subunit. Contacts protein L20.

In terms of biological role, this protein binds to 23S rRNA in the presence of protein L20. The chain is Large ribosomal subunit protein bL21 from Saccharophagus degradans (strain 2-40 / ATCC 43961 / DSM 17024).